A 147-amino-acid polypeptide reads, in one-letter code: NAD(P)H-quinone oxidoreductase subunit N (147 aa).

The protein belongs to the complex I NdhN subunit family. NDH-1 can be composed of about 15 different subunits; different subcomplexes with different compositions have been identified which probably have different functions.

Its subcellular location is the cellular thylakoid membrane. The catalysed reaction is a plastoquinone + NADH + (n+1) H(+)(in) = a plastoquinol + NAD(+) + n H(+)(out). It catalyses the reaction a plastoquinone + NADPH + (n+1) H(+)(in) = a plastoquinol + NADP(+) + n H(+)(out). NDH-1 shuttles electrons from an unknown electron donor, via FMN and iron-sulfur (Fe-S) centers, to quinones in the respiratory and/or the photosynthetic chain. The immediate electron acceptor for the enzyme in this species is believed to be plastoquinone. Couples the redox reaction to proton translocation, and thus conserves the redox energy in a proton gradient. Cyanobacterial NDH-1 also plays a role in inorganic carbon-concentration. The sequence is that of NAD(P)H-quinone oxidoreductase subunit N from Synechococcus sp. (strain JA-2-3B'a(2-13)) (Cyanobacteria bacterium Yellowstone B-Prime).